The following is a 224-amino-acid chain: Heme response regulator HssR (224 aa).

The Response regulatory domain maps to 3-116 (NCLIVDDDKK…ELLFRIKAVL (114 aa)). Aspartate 52 carries the 4-aspartylphosphate modification. Positions 124 to 222 (DNELQLGNLI…VRGQGYRVDQ (99 aa)) form a DNA-binding region, ompR/PhoB-type.

Phosphorylated by HssS.

The protein resides in the cytoplasm. Its function is as follows. Member of the two-component regulatory system HssS/HssR involved in intracellular heme homeostasis and tempering of staphylococcal virulence. Phosphorylated HssR binds to a direct repeat sequence within hrtAB promoter and activates the expression of hrtAB, an efflux pump, in response to extracellular heme, hemin, hemoglobin or blood. This is Heme response regulator HssR (hssR) from Staphylococcus epidermidis (strain ATCC 12228 / FDA PCI 1200).